Here is a 434-residue protein sequence, read N- to C-terminus: Maintenance of mitochondrial morphology protein 1 (434 aa).

Residues 1-105 (MEMSELLASE…SFSSQSFAEG (105 aa)) lie on the Lumenal side of the membrane. Residues 106 to 126 (LIVGQLSVIVALIFVIKFFVF) form a helical membrane-spanning segment. Over 127–434 (SEGGTKTATA…DDSVSVKSND (308 aa)) the chain is Cytoplasmic. In terms of domain architecture, SMP-LTD spans 194–408 (SPESLDWFNV…EPRFQFVKLP (215 aa)). Positions 415-434 (KNTRKEKTDTDDSVSVKSND) are disordered.

Belongs to the MMM1 family. As to quaternary structure, homodimer. Component of the ER-mitochondria encounter structure (ERMES) or MDM complex, composed of MMM1, MDM10, MDM12 and MDM34. An MMM1 homodimer associates with one molecule of MDM12 on each side in a pairwise head-to-tail manner, and the SMP-LTD domains of MMM1 and MDM12 generate a continuous hydrophobic tunnel for phospholipid trafficking.

The protein resides in the endoplasmic reticulum membrane. Its function is as follows. Component of the ERMES/MDM complex, which serves as a molecular tether to connect the endoplasmic reticulum (ER) and mitochondria. Components of this complex are involved in the control of mitochondrial shape and protein biogenesis, and function in nonvesicular lipid trafficking between the ER and mitochondria. The MDM12-MMM1 subcomplex functions in the major beta-barrel assembly pathway that is responsible for biogenesis of all outer membrane beta-barrel proteins, and acts in a late step after the SAM complex. The MDM10-MDM12-MMM1 subcomplex further acts in the TOM40-specific pathway after the action of the MDM12-MMM1 complex. Essential for establishing and maintaining the structure of mitochondria and maintenance of mtDNA nucleoids. In Kluyveromyces lactis (strain ATCC 8585 / CBS 2359 / DSM 70799 / NBRC 1267 / NRRL Y-1140 / WM37) (Yeast), this protein is Maintenance of mitochondrial morphology protein 1.